A 433-amino-acid chain; its full sequence is Transcobalamin-1 (433 aa).

Residues 1–23 form the signal peptide; that stretch reads MRQSHQLPLVGLLLFSFIPSQLC. Residues 24–310 are globular N-terminal alpha domain; that stretch reads EICEVSEENY…DINKDSSCVS (287 aa). Cystine bridges form between cysteine 26–cysteine 265, cysteine 105–cysteine 308, and cysteine 155–cysteine 197. 142–146 is a binding site for cyanocob(III)alamin; the sequence is TNYYQ. Asparagine 160 carries an N-linked (GlcNAc...) asparagine glycan. Aspartate 186 is a cyanocob(III)alamin binding site. The N-linked (GlcNAc...) asparagine glycan is linked to asparagine 216. Positions 240 and 289 each coordinate cyanocob(III)alamin. The segment at 311–332 is flexible linker; sequence ASGNFNISADEPITVTPPDSQS. N-linked (GlcNAc...) asparagine glycans are attached at residues asparagine 316, asparagine 337, asparagine 343, asparagine 349, asparagine 354, and asparagine 369. Residues 333–433 form a globular C-terminal beta domain region; the sequence is YISVNYSVRI…ENLEVRWSKY (101 aa). 385 to 386 is a cyanocob(III)alamin binding site; the sequence is YI. A disulfide bond links cysteine 388 and cysteine 393. Cyanocob(III)alamin-binding positions include 402-404, leucine 411, and tyrosine 433; that span reads WEL.

The protein belongs to the eukaryotic cobalamin transport proteins family. Post-translationally, contains about 30% carbohydrates. As to expression, produced by the salivary glands of the oral cavity, in response to ingestion of food. Major constituent of secondary granules in neutrophils.

The protein resides in the secreted. Binds vitamin B12 with femtomolar affinity and protects it from the acidic environment of the stomach. The sequence is that of Transcobalamin-1 (TCN1) from Homo sapiens (Human).